Here is a 149-residue protein sequence, read N- to C-terminus: Putative sugar phosphate isomerase YwlF (149 aa).

Residue His-9 participates in substrate binding. The active-site Proton acceptor is Cys-66. Substrate is bound at residue 67–72 (GTGIGM). His-99 serves as the catalytic Proton donor. Arg-133 provides a ligand contact to substrate.

It belongs to the LacAB/RpiB family.

The polypeptide is Putative sugar phosphate isomerase YwlF (ywlF) (Bacillus subtilis (strain 168)).